The sequence spans 441 residues: Ribulose bisphosphate carboxylase large chain (441 aa).

Lys-5 is modified (N6,N6,N6-trimethyllysine). Positions 114 and 164 each coordinate substrate. The Proton acceptor role is filled by Lys-166. Lys-168 is a substrate binding site. The Mg(2+) site is built by Lys-192, Asp-194, and Glu-195. Lys-192 carries the N6-carboxylysine modification. His-285 functions as the Proton acceptor in the catalytic mechanism. Substrate is bound by residues Arg-286, His-318, and Ser-370.

This sequence belongs to the RuBisCO large chain family. Type I subfamily. In terms of assembly, heterohexadecamer of 8 large chains and 8 small chains; disulfide-linked. The disulfide link is formed within the large subunit homodimers. Mg(2+) is required as a cofactor. In terms of processing, the disulfide bond which can form in the large chain dimeric partners within the hexadecamer appears to be associated with oxidative stress and protein turnover.

The protein localises to the plastid. The protein resides in the chloroplast. It catalyses the reaction 2 (2R)-3-phosphoglycerate + 2 H(+) = D-ribulose 1,5-bisphosphate + CO2 + H2O. It carries out the reaction D-ribulose 1,5-bisphosphate + O2 = 2-phosphoglycolate + (2R)-3-phosphoglycerate + 2 H(+). RuBisCO catalyzes two reactions: the carboxylation of D-ribulose 1,5-bisphosphate, the primary event in carbon dioxide fixation, as well as the oxidative fragmentation of the pentose substrate in the photorespiration process. Both reactions occur simultaneously and in competition at the same active site. The sequence is that of Ribulose bisphosphate carboxylase large chain from Begonia metallica x Begonia sanguinea.